We begin with the raw amino-acid sequence, 266 residues long: Phosphate import ATP-binding protein PstB (266 aa).

In terms of domain architecture, ABC transporter spans 15-261; sequence VQKSVVNKLN…PKNKQTEDYI (247 aa). 50 to 57 contributes to the ATP binding site; the sequence is GPSGCGKS.

Belongs to the ABC transporter superfamily. Phosphate importer (TC 3.A.1.7) family. The complex is composed of two ATP-binding proteins (PstB), two transmembrane proteins (PstC and PstA) and a solute-binding protein (PstS).

Its subcellular location is the cell inner membrane. The catalysed reaction is phosphate(out) + ATP + H2O = ADP + 2 phosphate(in) + H(+). Part of the ABC transporter complex PstSACB involved in phosphate import. Responsible for energy coupling to the transport system. In Nitrosomonas europaea (strain ATCC 19718 / CIP 103999 / KCTC 2705 / NBRC 14298), this protein is Phosphate import ATP-binding protein PstB.